We begin with the raw amino-acid sequence, 525 residues long: GMP synthase [glutamine-hydrolyzing] (525 aa).

Residues 9–207 (RILILDFGSQ…VRDICQCEAL (199 aa)) enclose the Glutamine amidotransferase type-1 domain. The Nucleophile role is filled by Cys-86. Catalysis depends on residues His-181 and Glu-183. In terms of domain architecture, GMPS ATP-PPase spans 208-400 (WTPAKIIDDA…LGLPYDMLYR (193 aa)). 235–241 (SGGVDSS) lines the ATP pocket.

As to quaternary structure, homodimer.

It carries out the reaction XMP + L-glutamine + ATP + H2O = GMP + L-glutamate + AMP + diphosphate + 2 H(+). The protein operates within purine metabolism; GMP biosynthesis; GMP from XMP (L-Gln route): step 1/1. Functionally, catalyzes the synthesis of GMP from XMP. The protein is GMP synthase [glutamine-hydrolyzing] of Shigella dysenteriae serotype 1 (strain Sd197).